Consider the following 625-residue polypeptide: Phosphomethylpyrimidine synthase (625 aa).

Substrate is bound by residues N231, M260, Y289, H325, 345 to 347 (SRG), 386 to 389 (DGLR), and E425. A Zn(2+)-binding site is contributed by H429. Substrate is bound at residue Y452. H493 contributes to the Zn(2+) binding site. Positions 573, 576, and 581 each coordinate [4Fe-4S] cluster.

This sequence belongs to the ThiC family. As to quaternary structure, homodimer. Requires [4Fe-4S] cluster as cofactor.

It catalyses the reaction 5-amino-1-(5-phospho-beta-D-ribosyl)imidazole + S-adenosyl-L-methionine = 4-amino-2-methyl-5-(phosphooxymethyl)pyrimidine + CO + 5'-deoxyadenosine + formate + L-methionine + 3 H(+). It participates in cofactor biosynthesis; thiamine diphosphate biosynthesis. In terms of biological role, catalyzes the synthesis of the hydroxymethylpyrimidine phosphate (HMP-P) moiety of thiamine from aminoimidazole ribotide (AIR) in a radical S-adenosyl-L-methionine (SAM)-dependent reaction. The polypeptide is Phosphomethylpyrimidine synthase (Acinetobacter baumannii (strain AB0057)).